Here is an 81-residue protein sequence, read N- to C-terminus: MRKLAIASIRVYQYAISPMMASHCRFYPSCSCYALEAIETHGLLRGGWLSLRRLGRCHPWNPGGYDPVPTHNTSNSSPMAE.

The segment at 60 to 81 (WNPGGYDPVPTHNTSNSSPMAE) is disordered. Positions 70–81 (THNTSNSSPMAE) are enriched in polar residues.

This sequence belongs to the UPF0161 family.

Its subcellular location is the cell inner membrane. Could be involved in insertion of integral membrane proteins into the membrane. The chain is Putative membrane protein insertion efficiency factor from Stutzerimonas stutzeri (strain A1501) (Pseudomonas stutzeri).